Here is a 372-residue protein sequence, read N- to C-terminus: Inner membrane protein YbiR (372 aa).

Residues 1 to 13 (MSLPFLRTLQGDR) are Periplasmic-facing. Transmembrane regions (helical) follow at residues 14–34 (FFQL…FAPK) and 35–55 (SWPA…MLLT). Topologically, residues 56 to 85 (KGVELSGYFDVLGRKMVRRFATERRLAMFM) are periplasmic. Residues 86 to 106 (VLAAALLSTFLTNDVALFIVV) form a helical membrane-spanning segment. The Cytoplasmic portion of the chain corresponds to 107–122 (PLTITLKRLCEIPVNR). The chain crosses the membrane as a helical span at residues 123-143 (LIIFEALAVNAGSLLTPIGNP). Over 144-155 (QNILIWGRSGLS) the chain is Periplasmic. The helical transmembrane segment at 156–176 (FAGFIAQMAPLAGAMMLTLLL) threads the bilayer. Residues 177–208 (LCWCCFPGKAMQYHTGVQTPEWKPRLVWSCLG) lie on the Cytoplasmic side of the membrane. Residues 209–229 (LYIVFLTALEFKQELWGLVIV) form a helical membrane-spanning segment. Over 230–247 (AAGFALLARRVVLSVDWT) the chain is Periplasmic. The helical transmembrane segment at 248 to 268 (LLLVFMAMFIDVHLLTQLPAL) threads the bilayer. The Cytoplasmic segment spans residues 269-283 (QGVLGNVSHLSEPGL). The helical transmembrane segment at 284–304 (WLTAIGLSQVISNVPSTILLL) threads the bilayer. Over 305–309 (NYVPP) the chain is Periplasmic. Residues 310–330 (SLLLVWAVNVGGFGLLPGSLA) form a helical membrane-spanning segment. The Cytoplasmic portion of the chain corresponds to 331-348 (NLIALRMANDRRIWWRFH). A helical membrane pass occupies residues 349–369 (LYSIPMLLWAALVGYVLLVIL). The Periplasmic segment spans residues 370-372 (PAN).

The protein belongs to the CitM (TC 2.A.11) transporter family.

It is found in the cell inner membrane. The chain is Inner membrane protein YbiR (ybiR) from Escherichia coli (strain K12).